Consider the following 457-residue polypeptide: Bifunctional protein GlmU (457 aa).

Positions 1–229 (MYNCAIILAA…YEEIMGVNSR (229 aa)) are pyrophosphorylase. UDP-N-acetyl-alpha-D-glucosamine is bound by residues 8-11 (LAAG), Lys22, Gln73, and 78-79 (GT). Asp103 is a Mg(2+) binding site. UDP-N-acetyl-alpha-D-glucosamine-binding residues include Gly140, Glu155, Asn170, and Asn227. Asn227 is a binding site for Mg(2+). Positions 230–250 (VQLSEAEIVMRKRINHKHMVN) are linker. Residues 251-457 (GVTFIDCEST…WLDKKGLLKK (207 aa)) are N-acetyltransferase. 2 residues coordinate UDP-N-acetyl-alpha-D-glucosamine: Arg332 and Lys350. Residue His362 is the Proton acceptor of the active site. Positions 365 and 376 each coordinate UDP-N-acetyl-alpha-D-glucosamine. Residues 385–386 (NY), Ala422, and Arg439 each bind acetyl-CoA.

This sequence in the N-terminal section; belongs to the N-acetylglucosamine-1-phosphate uridyltransferase family. The protein in the C-terminal section; belongs to the transferase hexapeptide repeat family. As to quaternary structure, homotrimer. The cofactor is Mg(2+).

It is found in the cytoplasm. The enzyme catalyses alpha-D-glucosamine 1-phosphate + acetyl-CoA = N-acetyl-alpha-D-glucosamine 1-phosphate + CoA + H(+). It carries out the reaction N-acetyl-alpha-D-glucosamine 1-phosphate + UTP + H(+) = UDP-N-acetyl-alpha-D-glucosamine + diphosphate. The protein operates within nucleotide-sugar biosynthesis; UDP-N-acetyl-alpha-D-glucosamine biosynthesis; N-acetyl-alpha-D-glucosamine 1-phosphate from alpha-D-glucosamine 6-phosphate (route II): step 2/2. It participates in nucleotide-sugar biosynthesis; UDP-N-acetyl-alpha-D-glucosamine biosynthesis; UDP-N-acetyl-alpha-D-glucosamine from N-acetyl-alpha-D-glucosamine 1-phosphate: step 1/1. It functions in the pathway bacterial outer membrane biogenesis; LPS lipid A biosynthesis. In terms of biological role, catalyzes the last two sequential reactions in the de novo biosynthetic pathway for UDP-N-acetylglucosamine (UDP-GlcNAc). The C-terminal domain catalyzes the transfer of acetyl group from acetyl coenzyme A to glucosamine-1-phosphate (GlcN-1-P) to produce N-acetylglucosamine-1-phosphate (GlcNAc-1-P), which is converted into UDP-GlcNAc by the transfer of uridine 5-monophosphate (from uridine 5-triphosphate), a reaction catalyzed by the N-terminal domain. This is Bifunctional protein GlmU from Clostridium botulinum (strain 657 / Type Ba4).